A 122-amino-acid polypeptide reads, in one-letter code: Large ribosomal subunit protein uL18 (122 aa).

This sequence belongs to the universal ribosomal protein uL18 family. As to quaternary structure, part of the 50S ribosomal subunit; part of the 5S rRNA/L5/L18/L25 subcomplex. Contacts the 5S and 23S rRNAs.

In terms of biological role, this is one of the proteins that bind and probably mediate the attachment of the 5S RNA into the large ribosomal subunit, where it forms part of the central protuberance. The chain is Large ribosomal subunit protein uL18 from Leptospira interrogans serogroup Icterohaemorrhagiae serovar copenhageni (strain Fiocruz L1-130).